A 64-amino-acid chain; its full sequence is Cecropin-A (64 aa).

The first 22 residues, 1–22 (MNFSRIFFFVFACLTALAMVNA), serve as a signal peptide directing secretion. A propeptide spans 23–26 (APEP) (removed by a dipeptidylpeptidase). At K63 the chain carries Lysine amide.

This sequence belongs to the cecropin family. Post-translationally, a protein with the same sequence as cecropin A, but lacking the carboxyl blocking group, has been isolated and called cecropin C.

It is found in the secreted. Its function is as follows. Cecropins have lytic and antibacterial activity against several Gram-positive and Gram-negative bacteria. This Hyalophora cecropia (Cecropia moth) protein is Cecropin-A.